Here is a 343-residue protein sequence, read N- to C-terminus: Dihydroorotase (343 aa).

Residues His13 and His15 each coordinate Zn(2+). Residues 15 to 17 and Asn41 contribute to the substrate site; that span reads HFR. Positions 98, 135, and 173 each coordinate Zn(2+). An N6-carboxylysine modification is found at Lys98. His135 contacts substrate. Substrate is bound at residue Leu218. Residue Asp246 coordinates Zn(2+). Asp246 is a catalytic residue. Residues His250 and Ala262 each coordinate substrate.

The protein belongs to the metallo-dependent hydrolases superfamily. DHOase family. Class II DHOase subfamily. In terms of assembly, homodimer. Zn(2+) serves as cofactor.

It catalyses the reaction (S)-dihydroorotate + H2O = N-carbamoyl-L-aspartate + H(+). It functions in the pathway pyrimidine metabolism; UMP biosynthesis via de novo pathway; (S)-dihydroorotate from bicarbonate: step 3/3. Catalyzes the reversible cyclization of carbamoyl aspartate to dihydroorotate. This Marinomonas sp. (strain MWYL1) protein is Dihydroorotase.